We begin with the raw amino-acid sequence, 437 residues long: Trigger factor (437 aa).

Residues 174–260 (GDFVQISFEG…VKSLKKKIFP (87 aa)) enclose the PPIase FKBP-type domain.

It belongs to the FKBP-type PPIase family. Tig subfamily.

The protein resides in the cytoplasm. It catalyses the reaction [protein]-peptidylproline (omega=180) = [protein]-peptidylproline (omega=0). Functionally, involved in protein export. Acts as a chaperone by maintaining the newly synthesized protein in an open conformation. Functions as a peptidyl-prolyl cis-trans isomerase. The chain is Trigger factor from Koribacter versatilis (strain Ellin345).